The primary structure comprises 177 residues: Nucleoside triphosphate/diphosphate phosphatase (177 aa).

Arg23 functions as the Proton donor in the catalytic mechanism. Residues Asn87, Asp103, Asp105, Asp107, Asp120, and Glu123 each coordinate Mg(2+).

It belongs to the Ntdp family. Mg(2+) is required as a cofactor.

It carries out the reaction a ribonucleoside 5'-triphosphate + H2O = a ribonucleoside 5'-diphosphate + phosphate + H(+). The enzyme catalyses a ribonucleoside 5'-diphosphate + H2O = a ribonucleoside 5'-phosphate + phosphate + H(+). Has nucleoside phosphatase activity towards nucleoside triphosphates and nucleoside diphosphates. This is Nucleoside triphosphate/diphosphate phosphatase from Streptococcus uberis (strain ATCC BAA-854 / 0140J).